Here is a 382-residue protein sequence, read N- to C-terminus: Rubredoxin-NAD(+) reductase (382 aa).

Residues 9–12 (TGLA), 33–34 (TA), lysine 42, valine 80, glutamate 156, aspartate 275, valine 287, and lysine 318 contribute to the FAD site.

The protein belongs to the FAD-dependent oxidoreductase family. In terms of assembly, homodimer. It depends on FAD as a cofactor.

The protein resides in the cytoplasm. It catalyses the reaction 2 reduced [rubredoxin] + NAD(+) + H(+) = 2 oxidized [rubredoxin] + NADH. It functions in the pathway hydrocarbon metabolism; alkane degradation. Its function is as follows. Involved in the hydrocarbon hydroxylating system, which transfers electrons from NADH to rubredoxin reductase and then through rubredoxin to alkane 1 monooxygenase. The chain is Rubredoxin-NAD(+) reductase (rubB) from Alcanivorax borkumensis (strain ATCC 700651 / DSM 11573 / NCIMB 13689 / SK2).